The chain runs to 124 residues: Large ribosomal subunit protein uL22 (124 aa).

This sequence belongs to the universal ribosomal protein uL22 family. As to quaternary structure, part of the 50S ribosomal subunit.

In terms of biological role, this protein binds specifically to 23S rRNA; its binding is stimulated by other ribosomal proteins, e.g. L4, L17, and L20. It is important during the early stages of 50S assembly. It makes multiple contacts with different domains of the 23S rRNA in the assembled 50S subunit and ribosome. The globular domain of the protein is located near the polypeptide exit tunnel on the outside of the subunit, while an extended beta-hairpin is found that lines the wall of the exit tunnel in the center of the 70S ribosome. The sequence is that of Large ribosomal subunit protein uL22 from Macrococcus caseolyticus (strain JCSC5402) (Macrococcoides caseolyticum).